A 428-amino-acid chain; its full sequence is NADP-specific glutamate dehydrogenase (428 aa).

Substrate is bound by residues lysine 68 and lysine 92. Lysine 104 functions as the Proton donor in the catalytic mechanism. Residues threonine 188 and asparagine 219 each contribute to the NADP(+) site. Residue serine 356 coordinates substrate.

The protein belongs to the Glu/Leu/Phe/Val dehydrogenases family. Homohexamer.

It carries out the reaction L-glutamate + NADP(+) + H2O = 2-oxoglutarate + NH4(+) + NADPH + H(+). Functionally, catalyzes the reversible oxidative deamination of glutamate to alpha-ketoglutarate and ammonia. This chain is NADP-specific glutamate dehydrogenase (gdhA), found in Synechocystis sp. (strain ATCC 27184 / PCC 6803 / Kazusa).